We begin with the raw amino-acid sequence, 217 residues long: Ras-related protein RABA1e (217 aa).

Residue 20–27 participates in GTP binding; sequence GDSGVGKS. Residues 42–50 carry the Effector region motif; that stretch reads SKSTIGVEF. Residues 68–72, 126–129, and 156–157 each bind GTP; these read DTAGQ, NKAD, and SA. S-geranylgeranyl cysteine attachment occurs at residues Cys214 and Cys215.

This sequence belongs to the small GTPase superfamily. Rab family.

The protein resides in the cell membrane. In terms of biological role, intracellular vesicle trafficking and protein transport. This is Ras-related protein RABA1e (RABA1E) from Arabidopsis thaliana (Mouse-ear cress).